A 723-amino-acid chain; its full sequence is MIYQANTLQVKELQDGIAELSFCAPASVNKLDLATLESLDKALDALNAHAGLRGLILTSNKDAFIVGADITEFLGLFAKPEAELDEWLRFANSIFSKLEDLPVPTLSMMRGHALGGGCECVLATDFRIGDKTTSIGLPETKLGIMPGFGGCVRLPRVIGADSAMEIITQGKACRADEALKVGLLDAIVETDQLLESAINTVSLAANEKLDWQLRRKQKTSALSLSKLEAMMSFTMAKGLVAQKAGPHYPAPITSVIAIEEAARSDRDAALDIERKHFVKLAKSEEAKALVGLFLNDQYIKGLAKHAGKSANKATERAAVLGAGIMGGGIAYQSALKGVPVMMKDIAQASLELGMNEASKLLNKRLSRGRLDGFKMAGILSSITPSLHYAGVEQSDVIVEAVVENPKVKAAVLSEVEGLVGEDTVLTSNTSTIPINLLAKSLKRPENFCGMHFFNPVHRMPLVEIIRGEHTSEETINRVVAYAAKMGKSPIVVNDCPGFFVNRVLFPYFGGFSMLLRDGADFTKIDKVMERKFGWPMGPAYLLDVVGLDTAHHAQAVMAQGFPERMGKEGRDAIDALYVAEKYGQKNGSGFYTYSVDKRGRPKKTFSEDILPILADVCQQPQDFDDQTIIQRVMIPMINEVVLCLEEGIIATPQEADMALVYGLGFPPFRGGVFRYLDSVGIGNFVEMAKSYQDLGAMYQVPQLLLDMAAKGESFYDGQQASSL.

The enoyl-CoA hydratase/isomerase stretch occupies residues Met-1–Glu-189. Position 296 (Asp-296) interacts with substrate. Residues Asn-311–Leu-723 form a 3-hydroxyacyl-CoA dehydrogenase region. Residues Met-325, Asp-344, Val-401–Glu-403, Lys-408, and Ser-430 each bind NAD(+). Catalysis depends on His-451, which acts as the For 3-hydroxyacyl-CoA dehydrogenase activity. Position 454 (Asn-454) interacts with NAD(+). Substrate contacts are provided by Asn-501 and Tyr-661.

The protein in the N-terminal section; belongs to the enoyl-CoA hydratase/isomerase family. This sequence in the C-terminal section; belongs to the 3-hydroxyacyl-CoA dehydrogenase family. Heterotetramer of two alpha chains (FadB) and two beta chains (FadA).

It carries out the reaction a (3S)-3-hydroxyacyl-CoA + NAD(+) = a 3-oxoacyl-CoA + NADH + H(+). It catalyses the reaction a (3S)-3-hydroxyacyl-CoA = a (2E)-enoyl-CoA + H2O. The enzyme catalyses a 4-saturated-(3S)-3-hydroxyacyl-CoA = a (3E)-enoyl-CoA + H2O. The catalysed reaction is (3S)-3-hydroxybutanoyl-CoA = (3R)-3-hydroxybutanoyl-CoA. It carries out the reaction a (3Z)-enoyl-CoA = a 4-saturated (2E)-enoyl-CoA. It catalyses the reaction a (3E)-enoyl-CoA = a 4-saturated (2E)-enoyl-CoA. It participates in lipid metabolism; fatty acid beta-oxidation. In terms of biological role, involved in the aerobic and anaerobic degradation of long-chain fatty acids via beta-oxidation cycle. Catalyzes the formation of 3-oxoacyl-CoA from enoyl-CoA via L-3-hydroxyacyl-CoA. It can also use D-3-hydroxyacyl-CoA and cis-3-enoyl-CoA as substrate. The polypeptide is Fatty acid oxidation complex subunit alpha (Vibrio atlanticus (strain LGP32) (Vibrio splendidus (strain Mel32))).